The following is a 219-amino-acid chain: MASGTVGGLSEVYSSAKRILLRARNGIEKLERFDSDPTDLASSVKRDITEVQSLCSNMDGLWRSIPVKSQRDLWRRKSEQVGEEAEYLNQSLEKYMWRNQRKMLEAKERADLLGRGSGEGAHILQIFDEEAQGMNSVKNSKRMLEDSFQSGVAILSKYAEQRDRLKSAQRKALDVLNTVGLSNSVLRLIERRNRVDTWIKYAGMIATLVILYLFIRWTR.

Position 2 is an N-acetylalanine (Ala2). Residues 2 to 197 are Cytoplasmic-facing; that stretch reads ASGTVGGLSE…LIERRNRVDT (196 aa). Residues 198–215 traverse the membrane as a helical; Anchor for type IV membrane protein segment; the sequence is WIKYAGMIATLVILYLFI. Residues 216 to 219 are Vesicular-facing; that stretch reads RWTR.

This sequence belongs to the GOSR2 family.

It is found in the golgi apparatus membrane. In terms of biological role, involved in transport of proteins from the cis/medial-Golgi to the trans-Golgi network. The chain is Membrin-12 (MEMB12) from Arabidopsis thaliana (Mouse-ear cress).